Consider the following 133-residue polypeptide: Homeobox protein BarH-like 2 (133 aa).

A DNA-binding region (homeobox) is located at residues 1-46 (ELEKEFQKQKYLSTPDRLDLAQSLGLTQLQVKTWYQNRRMKWKKMV). The segment at 45–133 (MVLKGGQEAP…VTSPEPPPSS (89 aa)) is disordered.

The protein belongs to the BAR homeobox family. In terms of tissue distribution, expressed in keratinizing epithelia such as wool follicle, tongue and esophagus. Expressed at low level in thymus. Not detected in spleen, skeletal muscle, brain, heart kidney, liver and lung.

It localises to the nucleus. In terms of biological role, transcription factor. Binds optimally to the DNA consensus sequence 5'-YYTAATGRTTTTY-3'. May control the expression of neural adhesion molecules such as L1 or Ng-CAM during embryonic development of both the central and peripherical nervous system. May be involved in controlling adhesive processes in keratinizing epithelia. In Ovis aries (Sheep), this protein is Homeobox protein BarH-like 2 (BARX2).